A 465-amino-acid polypeptide reads, in one-letter code: UDP-N-acetylmuramate--L-alanine ligase (465 aa).

115-121 (GAHGKTT) lines the ATP pocket.

Belongs to the MurCDEF family.

Its subcellular location is the cytoplasm. It catalyses the reaction UDP-N-acetyl-alpha-D-muramate + L-alanine + ATP = UDP-N-acetyl-alpha-D-muramoyl-L-alanine + ADP + phosphate + H(+). Its pathway is cell wall biogenesis; peptidoglycan biosynthesis. Cell wall formation. The sequence is that of UDP-N-acetylmuramate--L-alanine ligase from Coxiella burnetii (strain CbuG_Q212) (Coxiella burnetii (strain Q212)).